Consider the following 348-residue polypeptide: Heat-inducible transcription repressor HrcA (348 aa).

Belongs to the HrcA family.

In terms of biological role, negative regulator of class I heat shock genes (grpE-dnaK-dnaJ and groELS operons). Prevents heat-shock induction of these operons. This Chlorobium chlorochromatii (strain CaD3) protein is Heat-inducible transcription repressor HrcA.